Reading from the N-terminus, the 103-residue chain is Urease subunit beta (103 aa).

The protein belongs to the urease beta subunit family. As to quaternary structure, heterotrimer of UreA (gamma), UreB (beta) and UreC (alpha) subunits. Three heterotrimers associate to form the active enzyme.

It is found in the cytoplasm. The enzyme catalyses urea + 2 H2O + H(+) = hydrogencarbonate + 2 NH4(+). It functions in the pathway nitrogen metabolism; urea degradation; CO(2) and NH(3) from urea (urease route): step 1/1. The protein is Urease subunit beta of Streptomyces coelicolor (strain ATCC BAA-471 / A3(2) / M145).